The chain runs to 436 residues: Putative UDP-arabinose 4-epimerase 4 (436 aa).

The interval Met1–Gly20 is disordered. Residues Met1–Lys60 are Cytoplasmic-facing. A helical; Signal-anchor for type II membrane protein transmembrane segment spans residues Leu61–Phe81. The Lumenal portion of the chain corresponds to Thr82–Tyr436. His96–Leu127 contacts NAD(+). Catalysis depends on Tyr244, which acts as the Proton acceptor.

This sequence belongs to the NAD(P)-dependent epimerase/dehydratase family. NAD(+) is required as a cofactor.

Its subcellular location is the golgi apparatus. The protein localises to the golgi stack membrane. The catalysed reaction is UDP-beta-L-arabinopyranose = UDP-alpha-D-xylose. It participates in nucleotide-sugar biosynthesis; UDP-L-arabinose biosynthesis; UDP-L-arabinose from UDP-alpha-D-xylose: step 1/1. Its pathway is cell wall biogenesis; cell wall polysaccharide biosynthesis. In Arabidopsis thaliana (Mouse-ear cress), this protein is Putative UDP-arabinose 4-epimerase 4.